The sequence spans 304 residues: tRNA dimethylallyltransferase (304 aa).

An ATP-binding site is contributed by 10 to 17 (GPTASGKT). 12–17 (TASGKT) serves as a coordination point for substrate. 3 interaction with substrate tRNA regions span residues 35–38 (DSAL), 159–163 (QRLSR), and 240–245 (RCVGYR).

The protein belongs to the IPP transferase family. Monomer. It depends on Mg(2+) as a cofactor.

It carries out the reaction adenosine(37) in tRNA + dimethylallyl diphosphate = N(6)-dimethylallyladenosine(37) in tRNA + diphosphate. Its function is as follows. Catalyzes the transfer of a dimethylallyl group onto the adenine at position 37 in tRNAs that read codons beginning with uridine, leading to the formation of N6-(dimethylallyl)adenosine (i(6)A). This chain is tRNA dimethylallyltransferase, found in Shewanella sp. (strain W3-18-1).